The sequence spans 415 residues: Probable G-protein coupled receptor 19 (415 aa).

Over 1 to 69 (MVFAHRMDNS…LKPGEVATAS (69 aa)) the chain is Extracellular. Residues N25 and N52 are each glycosylated (N-linked (GlcNAc...) asparagine). The helical transmembrane segment at 70 to 90 (IFFGILWLFSIFGNSLVCLVI) threads the bilayer. Residues 91-102 (HRSRRTQSTTNY) lie on the Cytoplasmic side of the membrane. Residues 103–123 (FVVSMACADLLISVASTPFVL) traverse the membrane as a helical segment. Residues 124–143 (LQFTTGRWTLGSATCKVVRY) lie on the Extracellular side of the membrane. A disulfide bridge connects residues C138 and C210. The helical transmembrane segment at 144-161 (FQYLTPGVQIYVLLSICI) threads the bilayer. Over 162–182 (DRFYTIVYPLSFKVSREKAKK) the chain is Cytoplasmic. A helical membrane pass occupies residues 183-203 (MIAASWVFDAGFVTPVLFFYG). Residues 204-221 (SNWDSHCNYFLPSSWEGT) are Extracellular-facing. Residues 222–242 (AYTVIHFLVGFVIPSVLIILF) traverse the membrane as a helical segment. The Cytoplasmic segment spans residues 243–277 (YQKVIKYIWRIGTDGRTVRRTMNIVPRTKVKTIKM). A helical transmembrane segment spans residues 278 to 298 (FLILNLLFLLSWLPFHVAQLW). Residues 299-309 (HPHEQDYKKSS) lie on the Extracellular side of the membrane. Residues 310-325 (LVFTAITWISFSSSAS) traverse the membrane as a helical segment. The Cytoplasmic segment spans residues 326-415 (KPTLYSIYNA…INSNPPNTFV (90 aa)).

The protein belongs to the G-protein coupled receptor 1 family. In terms of tissue distribution, abundant expression in the brain.

The protein resides in the cell membrane. G-protein coupled receptor that plays a role in the regulation of circadian rhythms and energy metabolism. Participates in maintaining proper circadian gene expression in the suprachiasmatic nucleus (SCN), the locus of the master circadian clock in the brain. May function as a coordinator of aging-associated metabolic dysfunction, stress response, DNA integrity management, and eventual senescence. Upon binding to adropin, modulates mitochondrial energy metabolism via the p44/42-PDK4 signaling pathway, influencing pyruvate dehydrogenase activity. This chain is Probable G-protein coupled receptor 19 (GPR19), found in Homo sapiens (Human).